We begin with the raw amino-acid sequence, 403 residues long: Argininosuccinate synthase (403 aa).

9–17 is an ATP binding site; that stretch reads AYSGGLDTS. Position 86 (Tyr-86) interacts with L-citrulline. Gly-116 provides a ligand contact to ATP. L-aspartate-binding residues include Thr-118, Asn-122, and Asp-123. Position 122 (Asn-122) interacts with L-citrulline. L-citrulline is bound by residues Arg-126, Ser-174, Ser-183, Glu-259, and Tyr-271.

This sequence belongs to the argininosuccinate synthase family. Type 1 subfamily. In terms of assembly, homotetramer.

Its subcellular location is the cytoplasm. The enzyme catalyses L-citrulline + L-aspartate + ATP = 2-(N(omega)-L-arginino)succinate + AMP + diphosphate + H(+). It functions in the pathway amino-acid biosynthesis; L-arginine biosynthesis; L-arginine from L-ornithine and carbamoyl phosphate: step 2/3. This chain is Argininosuccinate synthase, found in Shouchella clausii (strain KSM-K16) (Alkalihalobacillus clausii).